The primary structure comprises 276 residues: MKKEVKIVTVGDGLIGKTTLLMTYYTNEFNTRVYSSFDSEYLNPLTVIINDDVIEISLWENDGFDSDGVYKESPPFIKYQPNHINVFLLLFSISDRDSFNNCLTKWNFEIKQNYPSIPVVLCGIKTDLREEENLVYKNSIDNSHFISFSEGVNMANEIDAVGYYECSSLKKKGLSELFDVLAIVGYSNILTKKKDKIKFKNNNNNNNYNENNQNISDTENNDNNNNNNNNNNNNNNNNNNNNNNNNNNNNNNNNNENNNNSYKNHNNKTTNKCKIS.

Gly11–Thr18 serves as a coordination point for GTP. Residues Tyr34–Leu42 carry the Effector region motif. Residues Glu60 to Phe64 and Ile124 to Asp127 contribute to the GTP site. A disordered region spans residues Phe199 to Ser276. Residues Lys200–Thr270 are compositionally biased toward low complexity. Cys273 carries the post-translational modification Cysteine methyl ester. Cys273 is lipidated: S-geranylgeranyl cysteine. The propeptide at Lys274–Ser276 is removed in mature form.

The protein belongs to the small GTPase superfamily. Rho family.

It localises to the cell membrane. The protein is Rho-related protein racO (racO) of Dictyostelium discoideum (Social amoeba).